The sequence spans 133 residues: Small ribosomal subunit protein uS11 (133 aa).

The tract at residues 1 to 23 is disordered; that stretch reads MPPKTRGAVRKPRKKDKKNIALG. The segment covering 7–17 has biased composition (basic residues); the sequence is GAVRKPRKKDK.

Belongs to the universal ribosomal protein uS11 family. As to quaternary structure, part of the 30S ribosomal subunit. Interacts with proteins S7 and S18. Binds to IF-3.

Its function is as follows. Located on the platform of the 30S subunit, it bridges several disparate RNA helices of the 16S rRNA. Forms part of the Shine-Dalgarno cleft in the 70S ribosome. The polypeptide is Small ribosomal subunit protein uS11 (Arthrobacter sp. (strain FB24)).